Here is a 497-residue protein sequence, read N- to C-terminus: Carboxylesterase (497 aa).

Ser-185 (acyl-ester intermediate) is an active-site residue. Catalysis depends on charge relay system residues Glu-319 and His-415.

Belongs to the type-B carboxylesterase/lipase family.

The protein localises to the secreted. The enzyme catalyses a carboxylic ester + H2O = an alcohol + a carboxylate + H(+). In Thermobifida fusca (Thermomonospora fusca), this protein is Carboxylesterase.